Consider the following 355-residue polypeptide: MSCLLSEEERLQKRINTRINRELQRDHKDAKKEIKLLLLGTGESGKSTFIKQMRIIHGKGYSKQDCLEYKNLVFRNILMSMHSMLQATAELKIAYIDPDAQRHVQLLMALRPETAQSLGGETCEAIRKLWQDAGVQECYQRRNEYQLSDSTKYYLDDLPRISSNDYVPTTQDVLRVRVPTTGINEYPFTINKIIFKMVDVGGQRSERRKWIHCFDHVTSVMFLVAISEYDQILVEADSRVNRMVESLHLFNTIISYPWFNKSSIILFLNKKDLLEEKVMHSHLIDYFEEYDGPKCDHVSARESIAKMFISINDMRSADIYPHFTCATDTENIKFVFDVVKNHILQQHITEVVPGL.

Cys3 carries the S-palmitoyl cysteine lipid modification. Residues Lys32–Leu355 enclose the G-alpha domain. The interval Lys35–Thr48 is G1 motif. Residues Gly40–Ser47, Leu174–Thr180, Asp199–Gln203, Asn269–Asp272, and Ala326 contribute to the GTP site. Mg(2+) contacts are provided by Ser47 and Thr180. Positions Asp172 to Thr180 are G2 motif. The G3 motif stretch occupies residues Phe195–Arg204. Residues Ile265–Asp272 are G4 motif. The interval Thr324–Thr329 is G5 motif.

The protein belongs to the G-alpha family. G(q) subfamily. In terms of assembly, g proteins are composed of 3 units; alpha, beta and gamma. The alpha chain contains the guanine nucleotide binding site.

Its function is as follows. Guanine nucleotide-binding proteins (G proteins) are involved as modulators or transducers in various transmembrane signaling systems. This Geodia cydonium (Sponge) protein is Guanine nucleotide-binding protein G(q) subunit alpha.